The primary structure comprises 256 residues: PHD finger protein ALFIN-LIKE 6 (256 aa).

A disordered region spans residues serine 144 to glycine 200. Residues aspartate 146–serine 163 are compositionally biased toward low complexity. The span at glutamate 182–glutamine 199 shows a compositional bias: acidic residues. Residues glycine 200 to lysine 252 form a PHD-type zinc finger.

This sequence belongs to the Alfin family. Interacts with H3K4me3 and to a lesser extent with H3K4me2. As to expression, ubiquitously expressed.

The protein localises to the nucleus. Histone-binding component that specifically recognizes H3 tails trimethylated on 'Lys-4' (H3K4me3), which mark transcription start sites of virtually all active genes. The sequence is that of PHD finger protein ALFIN-LIKE 6 (AL6) from Arabidopsis thaliana (Mouse-ear cress).